A 392-amino-acid polypeptide reads, in one-letter code: Lysine acetyltransferase (392 aa).

It carries out the reaction L-lysine + acetyl-CoA = N(6)-acetyl-L-lysine + CoA + H(+). Its pathway is amino-acid degradation; L-lysine degradation via acetylation pathway; glutarate from L-lysine: step 1/6. Activity is inhibited by 5-aminovalerate. In terms of biological role, lysine N-6-acetyl transferase (LAT) that catalyzes the first step of the lysine degradation pathway. The sequence is that of Lysine acetyltransferase from Yarrowia lipolytica (strain CLIB 122 / E 150) (Yeast).